Here is an 88-residue protein sequence, read N- to C-terminus: Small ribosomal subunit protein bS16c (88 aa).

As to quaternary structure, component of the chloroplast small ribosomal subunit (SSU). Mature 70S chloroplast ribosomes of higher plants consist of a small (30S) and a large (50S) subunit. The 30S small subunit contains 1 molecule of ribosomal RNA (16S rRNA) and 24 different proteins. The 50S large subunit contains 3 rRNA molecules (23S, 5S and 4.5S rRNA) and 33 different proteins.

The protein localises to the plastid. It is found in the chloroplast. Functionally, component of the chloroplast ribosome (chloro-ribosome), a dedicated translation machinery responsible for the synthesis of chloroplast genome-encoded proteins, including proteins of the transcription and translation machinery and components of the photosynthetic apparatus. This chain is Small ribosomal subunit protein bS16c, found in Spinacia oleracea (Spinach).